The sequence spans 247 residues: tRNA pseudouridine synthase A (247 aa).

The Nucleophile role is filled by Asp52. Tyr111 serves as a coordination point for substrate.

Belongs to the tRNA pseudouridine synthase TruA family. As to quaternary structure, homodimer.

It carries out the reaction uridine(38/39/40) in tRNA = pseudouridine(38/39/40) in tRNA. In terms of biological role, formation of pseudouridine at positions 38, 39 and 40 in the anticodon stem and loop of transfer RNAs. The sequence is that of tRNA pseudouridine synthase A from Caulobacter vibrioides (strain ATCC 19089 / CIP 103742 / CB 15) (Caulobacter crescentus).